The chain runs to 236 residues: UPF0502 protein Bcen2424_5610 (236 aa).

This sequence belongs to the UPF0502 family.

The polypeptide is UPF0502 protein Bcen2424_5610 (Burkholderia cenocepacia (strain HI2424)).